The primary structure comprises 154 residues: Endoribonuclease YbeY (154 aa).

Zn(2+) is bound by residues H113, H117, and H123.

Belongs to the endoribonuclease YbeY family. Zn(2+) is required as a cofactor.

The protein localises to the cytoplasm. In terms of biological role, single strand-specific metallo-endoribonuclease involved in late-stage 70S ribosome quality control and in maturation of the 3' terminus of the 16S rRNA. This chain is Endoribonuclease YbeY, found in Verminephrobacter eiseniae (strain EF01-2).